Here is a 177-residue protein sequence, read N- to C-terminus: Sec-independent protein translocase protein TatB (177 aa).

The helical transmembrane segment at 1-21 threads the bilayer; that stretch reads MFDFAWSEIAVIGVVALVVIG. Over residues 136–146 the composition is skewed to basic and acidic residues; sequence REKTVSSETAR. A disordered region spans residues 136 to 177; sequence REKTVSSETARRAATAPAFIPPGEAFRSARRAPAFIPPADQG.

This sequence belongs to the TatB family. The Tat system comprises two distinct complexes: a TatABC complex, containing multiple copies of TatA, TatB and TatC subunits, and a separate TatA complex, containing only TatA subunits. Substrates initially bind to the TatABC complex, which probably triggers association of the separate TatA complex to form the active translocon.

It localises to the cell inner membrane. Functionally, part of the twin-arginine translocation (Tat) system that transports large folded proteins containing a characteristic twin-arginine motif in their signal peptide across membranes. Together with TatC, TatB is part of a receptor directly interacting with Tat signal peptides. TatB may form an oligomeric binding site that transiently accommodates folded Tat precursor proteins before their translocation. The polypeptide is Sec-independent protein translocase protein TatB (Granulibacter bethesdensis (strain ATCC BAA-1260 / CGDNIH1)).